We begin with the raw amino-acid sequence, 83 residues long: Neurotoxin LmNaTx34.5 (83 aa).

A signal peptide spans 1–15 (FILVVIALMVIEVKS). The LCN-type CS-alpha/beta domain maps to 16–82 (DGYLMVRAGR…IWTYEKNTCS (67 aa)). Cystine bridges form between cysteine 29–cysteine 81, cysteine 33–cysteine 54, cysteine 40–cysteine 61, and cysteine 44–cysteine 63.

Belongs to the long (4 C-C) scorpion toxin superfamily. Sodium channel inhibitor family. Beta subfamily. In terms of tissue distribution, expressed by the venom gland.

Its subcellular location is the secreted. Its function is as follows. Binds voltage-independently at site-4 of sodium channels (Nav) and shift the voltage of activation toward more negative potentials thereby affecting sodium channel activation and promoting spontaneous and repetitive firing. This chain is Neurotoxin LmNaTx34.5, found in Lychas mucronatus (Chinese swimming scorpion).